The following is a 491-amino-acid chain: Ketol-acid reductoisomerase (NADP(+)) (491 aa).

One can recognise a KARI N-terminal Rossmann domain in the interval 15 to 208 (AQLGKCRFMG…GGHRAGVLES (194 aa)). NADP(+) contacts are provided by residues 45-48 (CGAQ), Arg-68, Arg-76, Ser-78, and 108-110 (DKQ). His-132 is an active-site residue. Gly-158 contributes to the NADP(+) binding site. 2 consecutive KARI C-terminal knotted domains span residues 209–344 (SFVA…TAPQ) and 345–484 (YEGK…MTDM). Residues Asp-217, Glu-221, Glu-389, and Glu-393 each coordinate Mg(2+). Ser-414 provides a ligand contact to substrate.

Belongs to the ketol-acid reductoisomerase family. Mg(2+) is required as a cofactor.

The catalysed reaction is (2R)-2,3-dihydroxy-3-methylbutanoate + NADP(+) = (2S)-2-acetolactate + NADPH + H(+). It carries out the reaction (2R,3R)-2,3-dihydroxy-3-methylpentanoate + NADP(+) = (S)-2-ethyl-2-hydroxy-3-oxobutanoate + NADPH + H(+). It participates in amino-acid biosynthesis; L-isoleucine biosynthesis; L-isoleucine from 2-oxobutanoate: step 2/4. It functions in the pathway amino-acid biosynthesis; L-valine biosynthesis; L-valine from pyruvate: step 2/4. Its function is as follows. Involved in the biosynthesis of branched-chain amino acids (BCAA). Catalyzes an alkyl-migration followed by a ketol-acid reduction of (S)-2-acetolactate (S2AL) to yield (R)-2,3-dihydroxy-isovalerate. In the isomerase reaction, S2AL is rearranged via a Mg-dependent methyl migration to produce 3-hydroxy-3-methyl-2-ketobutyrate (HMKB). In the reductase reaction, this 2-ketoacid undergoes a metal-dependent reduction by NADPH to yield (R)-2,3-dihydroxy-isovalerate. The chain is Ketol-acid reductoisomerase (NADP(+)) from Shigella dysenteriae serotype 1 (strain Sd197).